Consider the following 106-residue polypeptide: Small ribosomal subunit protein uS10 (106 aa).

This sequence belongs to the universal ribosomal protein uS10 family. As to quaternary structure, part of the 30S ribosomal subunit.

Involved in the binding of tRNA to the ribosomes. This Wolbachia sp. subsp. Drosophila simulans (strain wRi) protein is Small ribosomal subunit protein uS10.